The primary structure comprises 3414 residues: Genome polyprotein (3414 aa).

Positions 1–27 (MAGKAVLKGKGGGPPRRASKVAPKKTR) are disordered. Over 1–98 (MAGKAVLKGK…LHRRGSRRTT (98 aa)) the chain is Cytoplasmic. Over residues 17-27 (RASKVAPKKTR) the composition is skewed to basic residues. The propeptide at 97–117 (TTIDWMTPLLITVMLGMCLTA) is ER anchor for the capsid protein C, removed in mature form by serine protease NS3. The chain crosses the membrane as a helical span at residues 99–117 (IDWMTPLLITVMLGMCLTA). The Extracellular portion of the chain corresponds to 118-242 (TVRRERDGSM…HLTRVEGWVW (125 aa)). Residue asparagine 144 is glycosylated (N-linked (GlcNAc...) asparagine; by host). Residues 243–260 (KNKLFTLSLVMVAWLMVD) form a helical membrane-spanning segment. Glycine 261 is a topological domain (cytoplasmic). Residues 262-280 (LLPRILIVVVALALVPAYA) form a helical membrane-spanning segment. The Extracellular segment spans residues 281–727 (SRCTHLENRD…HTVLGGAFNT (447 aa)). Disulfide bonds link cysteine 283/cysteine 310, cysteine 340/cysteine 396, cysteine 340/cysteine 401, cysteine 354/cysteine 385, cysteine 372/cysteine 396, and cysteine 372/cysteine 401. The tract at residues 378–391 (DRGWGNHCGLFGKG) is fusion peptide. Asparagine 434 is a glycosylation site (N-linked (GlcNAc...) asparagine; by host). 2 disulfides stabilise this stretch: cysteine 466/cysteine 570 and cysteine 587/cysteine 618. The chain crosses the membrane as a helical span at residues 728 to 748 (LLGGVGFLPKILLGVAMAWLG). Over 749–755 (LNMRNPT) the chain is Cytoplasmic. Residues 756-776 (LSMGFLLSGGLVLAMTLGVGA) form a helical membrane-spanning segment. Residues 777-1187 (DVGCAVDTER…LVSVESLFRY (411 aa)) lie on the Extracellular side of the membrane. Cystine bridges form between cysteine 780-cysteine 791, cysteine 831-cysteine 920, cysteine 955-cysteine 1000, cysteine 1057-cysteine 1106, cysteine 1068-cysteine 1090, and cysteine 1089-cysteine 1093. Residues asparagine 861, asparagine 983, and asparagine 999 are each glycosylated (N-linked (GlcNAc...) asparagine; by host). A helical transmembrane segment spans residues 1188–1208 (LVAVGLVFQLELGPEAVAMVL). Topologically, residues 1209-1232 (LQAVFEMRTCLLSGFVLRRSITTR) are cytoplasmic. A helical membrane pass occupies residues 1233 to 1253 (EIVTVYFLLLVLEMGIPVKGL). The Lumenal portion of the chain corresponds to 1254 to 1267 (EHLWRWTDALAMGA). Residues 1268–1288 (IIFRACTAEGKTGIGLLLAAF) form a helical membrane-spanning segment. At 1289-1300 (MTQSDMNIIHDG) the chain is on the cytoplasmic side. The chain crosses the membrane as a helical span at residues 1301–1319 (LTAFLCVATTMAIWRYIRG). Residues 1320 to 1325 (QGERKG) lie on the Lumenal side of the membrane. The chain crosses the membrane as a helical span at residues 1326 to 1346 (LTWIVPLAGILGGEGSGVRLL). Residues 1347–1359 (AFWELAASRGRRS) are Cytoplasmic-facing. A helical transmembrane segment spans residues 1360-1378 (FNEPMTVIGVMLTLASGMM). The Lumenal portion of the chain corresponds to 1379–1382 (RHTS). A helical transmembrane segment spans residues 1383–1403 (QEAVCAMALAAFLLLMLTLGT). Residues 1404–1454 (RKMQLLAEWSGNIEWNPELTSEGGEVSLRVRQDALGNLHLTELEKEERMMA) lie on the Cytoplasmic side of the membrane. The interacts with and activates NS3 protease stretch occupies residues 1410 to 1449 (AEWSGNIEWNPELTSEGGEVSLRVRQDALGNLHLTELEKE). Residues 1455-1475 (FWLVVGLIASAFHWSGILIVM) constitute an intramembrane region (helical). Residues 1476 to 2160 (GLWTISEMLG…RIGERDAPEA (685 aa)) are Cytoplasmic-facing. In terms of domain architecture, Peptidase S7 spans 1490–1669 (TDLVFSGCSE…EVEKSRPNLP (180 aa)). Catalysis depends on charge relay system; for serine protease NS3 activity residues histidine 1543, aspartate 1567, and serine 1627. Residues 1675 to 1831 (TGWTAKGQIT…ESNGAIASEE (157 aa)) enclose the Helicase ATP-binding domain. Residue 1688–1695 (MHPGSGKT) coordinates ATP. The DEAH box motif lies at 1779-1782 (DEAH). The region spanning 1841-2000 (DGFDWITEYE…TARGPVATFY (160 aa)) is the Helicase C-terminal domain. Lysine 1883 bears the N6-acetyllysine; by host mark. A helical transmembrane segment spans residues 2161-2181 (FLTAVEMLVLGLATLGVVWCF). Topologically, residues 2182-2189 (VVRTSVSR) are lumenal. Positions 2190–2209 (MVLGTLVLATSLIFLWAGGV) form an intramembrane region, helical. Residue glycine 2210 is a topological domain, lumenal. A helical membrane pass occupies residues 2211-2231 (YGNMAGVALVFYTLLTVLQPE). Residues 2232-2238 (TGKQRSS) lie on the Cytoplasmic side of the membrane. The helical transmembrane segment at 2239 to 2259 (DDNKLAYFLLTLCGLAGMVAA) threads the bilayer. The Lumenal portion of the chain corresponds to 2260 to 2296 (NEMGLLEKTKADLAALFARDQGETVRWGEWTNLDIQP). The helical intramembrane region spans 2297-2315 (ARSWGTYVLVVSLFTPYML). The Lumenal segment spans residues 2316-2343 (HQLQTRIQQLVNSAVASGAQAMRDLGGG). Positions 2344–2364 (TPFFGVAGHVLALGVASLVGA) form an intramembrane region, helical. The Lumenal segment spans residues 2365 to 2368 (TPTS). Residues 2369–2389 (LILGVGLAAFHLAIVVSGLEA) form a helical membrane-spanning segment. At 2390 to 2432 (ELTQRAHKVFFSAMVRNPMVDGDVINPFGDGEAKPALYERKLS) the chain is on the cytoplasmic side. A helical transmembrane segment spans residues 2433–2453 (LILALVLCLASVVMNRTFVAV). At 2454-2477 (TEAGAVGVAAAMQLLRPEMDVLWT) the chain is on the lumenal side. Residues 2478–2498 (MPVACGMSGVVRGSLWGLLPL) traverse the membrane as a helical segment. Over 2499–3414 (GHRLWLRTTG…WELKLESSIF (916 aa)) the chain is Cytoplasmic. One can recognise an mRNA cap 0-1 NS5-type MT domain in the interval 2512 to 2776 (GGSEGDTLGD…EIDLGVGTRS (265 aa)). An S-adenosyl-L-methionine-binding site is contributed by serine 2567. Serine 2567 bears the Phosphoserine mark. Lysine 2572 (for 2'-O-MTase activity) is an active-site residue. Residues glycine 2597, tryptophan 2598, threonine 2615, isoleucine 2616, aspartate 2642, and valine 2643 each contribute to the S-adenosyl-L-methionine site. The active-site For 2'-O-MTase activity is aspartate 2657. Isoleucine 2658 lines the S-adenosyl-L-methionine pocket. Catalysis depends on for 2'-O-MTase activity residues lysine 2694 and glutamate 2730. The interaction with host SCRIB stretch occupies residues 2730 to 2734 (EMYFS). Tyrosine 2732 serves as a coordination point for S-adenosyl-L-methionine. Zn(2+) contacts are provided by glutamate 2950, histidine 2954, cysteine 2959, and cysteine 2962. Residues 3040 to 3189 (GLFYADDTAG…RPVDDRFSKA (150 aa)) enclose the RdRp catalytic domain. Positions 3224, 3240, and 3359 each coordinate Zn(2+).

It in the N-terminal section; belongs to the class I-like SAM-binding methyltransferase superfamily. mRNA cap 0-1 NS5-type methyltransferase family. Homodimer. Interacts (via N-terminus) with host EXOC1 (via C-terminus); this interaction results in EXOC1 degradation through the proteasome degradation pathway. In terms of assembly, forms heterodimers with envelope protein E in the endoplasmic reticulum and Golgi. As to quaternary structure, homodimer; in the endoplasmic reticulum and Golgi. Interacts with protein prM. Interacts with non-structural protein 1. Homodimer; Homohexamer when secreted. Interacts with envelope protein E. In terms of assembly, interacts (via N-terminus) with serine protease NS3. As to quaternary structure, forms a heterodimer with serine protease NS3. May form homooligomers. Forms a heterodimer with NS2B. Interacts with non-structural protein 2A (via N-terminus). Interacts with NS4B. Interacts with unphosphorylated RNA-directed RNA polymerase NS5; this interaction stimulates RNA-directed RNA polymerase NS5 guanylyltransferase activity. In terms of assembly, interacts with serine protease NS3. Interacts with NS1. As to quaternary structure, homodimer. Interacts with host STAT2; this interaction inhibits the phosphorylation of the latter, and, when all viral proteins are present (polyprotein), targets STAT2 for degradation. Interacts with serine protease NS3. Interacts with host SCRIB; this interaction targets NS5 to the cell membrane periphery and nucleus, thereby allowing efficient host nuclear STAT1 inhibition. Post-translationally, specific enzymatic cleavages in vivo yield mature proteins. Cleavages in the lumen of endoplasmic reticulum are performed by host signal peptidase, whereas cleavages in the cytoplasmic side are performed by serine protease NS3. Signal cleavage at the 2K-4B site requires a prior NS3 protease-mediated cleavage at the 4A-2K site. Cleaved in post-Golgi vesicles by a host furin, releasing the mature small envelope protein M, and peptide pr. This cleavage is incomplete as up to 30% of viral particles still carry uncleaved prM. In terms of processing, N-glycosylated. Post-translationally, N-glycosylated. The excreted form is glycosylated and this is required for efficient secretion of the protein from infected cells. Acetylated by host KAT5. Acetylation modulates NS3 RNA-binding and unwinding activities and plays an important positive role for viral replication. In terms of processing, phosphorylated on serines residues. This phosphorylation may trigger NS5 nuclear localization.

The protein resides in the virion. Its subcellular location is the host nucleus. It localises to the host cytoplasm. It is found in the host perinuclear region. The protein localises to the secreted. The protein resides in the virion membrane. Its subcellular location is the host endoplasmic reticulum membrane. It carries out the reaction Selective hydrolysis of -Xaa-Xaa-|-Yaa- bonds in which each of the Xaa can be either Arg or Lys and Yaa can be either Ser or Ala.. The catalysed reaction is RNA(n) + a ribonucleoside 5'-triphosphate = RNA(n+1) + diphosphate. It catalyses the reaction a ribonucleoside 5'-triphosphate + H2O = a ribonucleoside 5'-diphosphate + phosphate + H(+). The enzyme catalyses ATP + H2O = ADP + phosphate + H(+). It carries out the reaction a 5'-end (5'-triphosphoguanosine)-ribonucleoside in mRNA + S-adenosyl-L-methionine = a 5'-end (N(7)-methyl 5'-triphosphoguanosine)-ribonucleoside in mRNA + S-adenosyl-L-homocysteine. The catalysed reaction is a 5'-end (N(7)-methyl 5'-triphosphoguanosine)-ribonucleoside in mRNA + S-adenosyl-L-methionine = a 5'-end (N(7)-methyl 5'-triphosphoguanosine)-(2'-O-methyl-ribonucleoside) in mRNA + S-adenosyl-L-homocysteine + H(+). Functionally, plays a role in virus budding by binding to membrane and gathering the viral RNA into a nucleocapsid that forms the core of a mature virus particle. During virus entry, may induce genome penetration in host cytoplasm after hemifusion induced by surface proteins. Can migrate to the cell nucleus where it modulates host functions. Inhibits RNA silencing by interfering with host Dicer. Its function is as follows. Prevents premature fusion activity of envelope proteins in trans-Golgi by binding to envelope protein E at pH6.0. After virion release in extracellular space gets dissociated from E dimers. In terms of biological role, acts as a chaperone for envelope protein E during intracellular virion assembly by masking and inactivating envelope protein E fusion peptide. prM is the only viral peptide matured by host furin in the trans-Golgi network. Presumably to avoid catastrophic activation of the viral fusion activity in acidic GolGi compartment prior to virion release. prM-E cleavage is ineficient, and many virions are only partially matured. These uncleaved prM would play a role in immune evasion. Functionally, may play a role in virus budding. Exerts cytotoxic effects by activating a mitochondrial apoptotic pathway through M extodomain. May display a viroporin activity. Binds to host cell surface receptor and mediates fusion between viral and cellular membranes. Envelope protein is synthesized in the endoplasmic reticulum in the form of heterodimer with protein prM. They play a role in virion budding in the ER, and the newly formed immature particle is covered with 60 spikes composed of heterodimer between precursor prM and envelope protein E. The virion is transported to the Golgi apparatus where the low pH causes dissociation of PrM-E heterodimers and formation of E homodimers. prM-E cleavage is ineficient, and many virions are only partially matured. These uncleaved prM would play a role in immune evasion. Its function is as follows. Involved in immune evasion, pathogenesis and viral replication. Once cleaved off the polyprotein, is targeted to three destinations: the viral replication cycle, the plasma membrane and the extracellular compartment. Essential for viral replication. Required for formation of the replication complex and recruitment of other non-structural proteins to the ER-derived membrane structures. Excreted as a hexameric lipoparticle that plays a role against host immune response. Antagonizing the complement function. Binds to the host macrophages and dendritic cells. Inhibits signal transduction originating from Toll-like receptor 3 (TLR3). In terms of biological role, component of the viral RNA replication complex that functions in virion assembly and antagonizes the host immune response. Functionally, required cofactor for the serine protease function of NS3. May have membrane-destabilizing activity and form viroporins. Displays three enzymatic activities: serine protease, NTPase and RNA helicase. NS3 serine protease, in association with NS2B, performs its autocleavage and cleaves the polyprotein at dibasic sites in the cytoplasm: C-prM, NS2A-NS2B, NS2B-NS3, NS3-NS4A, NS4A-2K and NS4B-NS5. NS3 RNA helicase binds RNA and unwinds dsRNA in the 3' to 5' direction. Its function is as follows. Regulates the ATPase activity of the NS3 helicase activity. NS4A allows NS3 helicase to conserve energy during unwinding. In terms of biological role, functions as a signal peptide for NS4B and is required for the interferon antagonism activity of the latter. Functionally, induces the formation of ER-derived membrane vesicles where the viral replication takes place. Inhibits interferon (IFN)-induced host STAT1 phosphorylation and nuclear translocation, thereby preventing the establishment of cellular antiviral state by blocking the IFN-alpha/beta pathway. Inhibits STAT2 translocation in the nucleus after IFN-alpha treatment. Replicates the viral (+) and (-) genome, and performs the capping of genomes in the cytoplasm. NS5 methylates viral RNA cap at guanine N-7 and ribose 2'-O positions. Besides its role in genome replication, also prevents the establishment of cellular antiviral state by blocking the interferon-alpha/beta (IFN-alpha/beta) signaling pathway. Inhibits host TYK2 and STAT2 phosphorylation, thereby preventing activation of JAK-STAT signaling pathway. This is Genome polyprotein from Homo sapiens (Human).